Here is a 237-residue protein sequence, read N- to C-terminus: (5-formylfuran-3-yl)methyl phosphate synthase (237 aa).

Catalysis depends on Lys29, which acts as the Schiff-base intermediate with substrate. Lys87 serves as the catalytic Proton acceptor.

This sequence belongs to the MfnB family.

The catalysed reaction is 2 D-glyceraldehyde 3-phosphate = 4-(hydroxymethyl)-2-furancarboxaldehyde phosphate + phosphate + 2 H2O. The protein operates within cofactor biosynthesis; methanofuran biosynthesis. Functionally, catalyzes the formation of 4-(hydroxymethyl)-2-furancarboxaldehyde phosphate (4-HFC-P) from two molecules of glyceraldehyde-3-P (GA-3-P). This is (5-formylfuran-3-yl)methyl phosphate synthase from Methanopyrus kandleri (strain AV19 / DSM 6324 / JCM 9639 / NBRC 100938).